A 141-amino-acid polypeptide reads, in one-letter code: Putative pre-16S rRNA nuclease (141 aa).

The protein belongs to the YqgF nuclease family.

It is found in the cytoplasm. In terms of biological role, could be a nuclease involved in processing of the 5'-end of pre-16S rRNA. The polypeptide is Putative pre-16S rRNA nuclease (Aliivibrio salmonicida (strain LFI1238) (Vibrio salmonicida (strain LFI1238))).